The sequence spans 363 residues: NAD(P)H-quinone oxidoreductase subunit 1, chloroplastic (363 aa).

6 helical membrane passes run 30-50 (LVPILTLVLGITIGVLVIVWL), 98-118 (FSIGPAIAVISILLSFSVIPF), 129-149 (IGIFLWIAISSIAPVGLLMSG), 248-268 (YSGIKFGLFYVASYLNLLLSS), 300-320 (IIGTTIGIFITLAKTYLFLFI), and 343-363 (FLLPISLGNLLLTTSFQLLSL).

This sequence belongs to the complex I subunit 1 family. In terms of assembly, NDH is composed of at least 16 different subunits, 5 of which are encoded in the nucleus.

It is found in the plastid. It localises to the chloroplast thylakoid membrane. It catalyses the reaction a plastoquinone + NADH + (n+1) H(+)(in) = a plastoquinol + NAD(+) + n H(+)(out). It carries out the reaction a plastoquinone + NADPH + (n+1) H(+)(in) = a plastoquinol + NADP(+) + n H(+)(out). In terms of biological role, NDH shuttles electrons from NAD(P)H:plastoquinone, via FMN and iron-sulfur (Fe-S) centers, to quinones in the photosynthetic chain and possibly in a chloroplast respiratory chain. The immediate electron acceptor for the enzyme in this species is believed to be plastoquinone. Couples the redox reaction to proton translocation, and thus conserves the redox energy in a proton gradient. In Gossypium barbadense (Sea Island cotton), this protein is NAD(P)H-quinone oxidoreductase subunit 1, chloroplastic.